Reading from the N-terminus, the 252-residue chain is Phosphate import ATP-binding protein PstB (252 aa).

The ABC transporter domain occupies 6-247 (ITIEKLNLYY…PKDERTEKYI (242 aa)). 38 to 45 (GPSGCGKS) is an ATP binding site.

Belongs to the ABC transporter superfamily. Phosphate importer (TC 3.A.1.7) family. The complex is composed of two ATP-binding proteins (PstB), two transmembrane proteins (PstC and PstA) and a solute-binding protein (PstS).

Its subcellular location is the cell membrane. It carries out the reaction phosphate(out) + ATP + H2O = ADP + 2 phosphate(in) + H(+). In terms of biological role, part of the ABC transporter complex PstSACB involved in phosphate import. Responsible for energy coupling to the transport system. This is Phosphate import ATP-binding protein PstB from Lactobacillus delbrueckii subsp. bulgaricus (strain ATCC 11842 / DSM 20081 / BCRC 10696 / JCM 1002 / NBRC 13953 / NCIMB 11778 / NCTC 12712 / WDCM 00102 / Lb 14).